The chain runs to 64 residues: Cytochrome c oxidase subunit 5C-2 (64 aa).

The chain crosses the membrane as a helical span at residues 15-34; that stretch reads SVVKELIIGLTLGLAAGGLW.

This sequence belongs to the cytochrome c oxidase subunit 5C family.

It is found in the mitochondrion inner membrane. Its function is as follows. This protein is one of the nuclear-coded polypeptide chains of cytochrome c oxidase, the terminal oxidase in mitochondrial electron transport. The polypeptide is Cytochrome c oxidase subunit 5C-2 (Arabidopsis thaliana (Mouse-ear cress)).